The primary structure comprises 917 residues: DNA mismatch repair protein spellchecker 1 (917 aa).

667–674 (GPNMGGKS) contacts ATP.

The protein belongs to the DNA mismatch repair MutS family. As to quaternary structure, heterodimer of Msh2/Spel and Msh6.

The protein localises to the nucleus. Involved in postreplication mismatch repair. Binds specifically to DNA containing mismatched nucleotides thus providing a target for the excision repair processes characteristic of postreplication mismatch repair. This chain is DNA mismatch repair protein spellchecker 1 (spel1), found in Drosophila melanogaster (Fruit fly).